Here is a 133-residue protein sequence, read N- to C-terminus: Holo-[acyl-carrier-protein] synthase (133 aa).

2 residues coordinate Mg(2+): D8 and E56.

This sequence belongs to the P-Pant transferase superfamily. AcpS family. It depends on Mg(2+) as a cofactor.

It is found in the cytoplasm. It carries out the reaction apo-[ACP] + CoA = holo-[ACP] + adenosine 3',5'-bisphosphate + H(+). In terms of biological role, transfers the 4'-phosphopantetheine moiety from coenzyme A to a Ser of acyl-carrier-protein. This is Holo-[acyl-carrier-protein] synthase from Clostridium perfringens (strain ATCC 13124 / DSM 756 / JCM 1290 / NCIMB 6125 / NCTC 8237 / Type A).